The following is a 520-amino-acid chain: MHKKSACEREGKELKRDFFNKFNLGTSNFVTPGKQLEYVSECKPDSTAVICLDKEQNCSVITWHQLHVYSSQLAWYLIENEIGPGSIVLTMFPNSIEHIIAVFAIWKAGACYMPMSYKAAESEIREACDTIHPNAAFAECKIPGLKFCLSADEIYEAMEGRSKEMPSDRLANPNMISLSGGTSGKMKFIRQNLPCGLDDETIRSWSLMSGMGFEQRQLLVGPLFHGAPHSAAFNGLFMGNTLVLTRNLCPGNILNMIKKYKIEFIQMVPTLMNRLAKLEGVGKEDFASLKALCHTGGVCSPWLKQIWIDLLGPEKIYEMYSMTECIGLTCIRGDEWVKHPGSIGRPVGDSKVSIRDENGKEVAPFEIGEIYMTAPASYLVTEYINWEPLEVKEGGFRSVGDIGYVDEQGYLYFSDRRSDMLVSGGENVFATEVETALLRYKDILDAVVVGIPDEDLGRRLHAVIETGKEIPAEELKTFLRKYLTPYKIPKTFEFVRSIRRGDNGKADRKRILEDCIARGG.

This sequence belongs to the ATP-dependent AMP-binding enzyme family. In terms of assembly, homodimer. The cofactor is Mg(2+).

The enzyme catalyses cholate + ATP + CoA = choloyl-CoA + AMP + diphosphate. It carries out the reaction deoxycholate + ATP + CoA = deoxycholoyl-CoA + AMP + diphosphate. The catalysed reaction is chenodeoxycholate + ATP + CoA = chenodeoxycholoyl-CoA + AMP + diphosphate. It functions in the pathway lipid metabolism; bile acid biosynthesis. Inhibited by diphosphate. In terms of biological role, functions in the bile acid 7alpha-dehydroxylation pathway, which forms secondary bile acids via the 7alpha-dehydroxylation of primary bile acids, and is carried out by intestinal anaerobic bacteria. Catalyzes the initial step in this pathway, i.e. the ATP-dependent thioesterification of primary bile acids with coenzyme A. Is active with C-24 bile acids with free carboxyl groups such as cholate, deoxycholate and chenodeoxycholate. Produces AMP and pyrophosphate in addition to the bile acid-CoA thioester. The protein is Bile acid--coenzyme A ligase of Clostridium scindens (strain JCM 10418 / VPI 12708).